Reading from the N-terminus, the 376-residue chain is DNA replication and repair protein RecF (376 aa).

30–37 (GNNAQGKS) serves as a coordination point for ATP.

This sequence belongs to the RecF family.

Its subcellular location is the cytoplasm. The RecF protein is involved in DNA metabolism; it is required for DNA replication and normal SOS inducibility. RecF binds preferentially to single-stranded, linear DNA. It also seems to bind ATP. The sequence is that of DNA replication and repair protein RecF from Nostoc sp. (strain PCC 7120 / SAG 25.82 / UTEX 2576).